A 474-amino-acid chain; its full sequence is MLRRYLTLSFSSLLLLALLFLTGCSFVRPQFRRGFRTQFKINSIPTVSDPYHINYDLTFSLNFASNKRNTYGTGWLIDWKGDENNPEKNDPFKVYLATNLHVIDALRNNNDYEPYNKDSNNQAFNSEEITRFFSIGKYTYPSIFSELNFIINAREAFVSIQTSTIPKTAYAAVNFVETQGEDESYTDSLSTDNKRDIYADFAVIEIPLFLTNHRDYQVFNEFIKPAIETYKQLGNSSFEKKQLDQHKNDNFYMLGYPLVESSIDALILNQRRQYNNSYTEKYTPQTLTKDQRTIDLSREVPTLIQNKTENSTGSQLLVNQSLSSTSEGIIEFIKLPEFKLNYHNKSYRQYGRGFALQNTNFRPGSSGTLMLNNQKQIAGIYFGVLDFGEDVSLMSNIGVGQILRVPQKNNTRNRSIATNKSNYDLIFGDSNTTNFYAKFARQNNTHLYQMISNSKDTKLKYVNTVEKTVKASIK.

Residues 1–23 form the signal peptide; it reads MLRRYLTLSFSSLLLLALLFLTG. Residue Cys24 is the site of N-palmitoyl cysteine attachment. Cys24 carries S-diacylglycerol cysteine lipidation.

It belongs to the MG067/MG068/MG395 family.

The protein resides in the cell membrane. This is an uncharacterized protein from Mycoplasma genitalium (strain ATCC 33530 / DSM 19775 / NCTC 10195 / G37) (Mycoplasmoides genitalium).